The sequence spans 372 residues: Alanine dehydrogenase 1 (372 aa).

Residue histidine 94 is part of the active site. 170-200 (TYVIFGGGVAATNAANVALGLNAKVIIIELN) provides a ligand contact to NAD(+).

The protein belongs to the AlaDH/PNT family.

The catalysed reaction is L-alanine + NAD(+) + H2O = pyruvate + NH4(+) + NADH + H(+). Its pathway is amino-acid degradation; L-alanine degradation via dehydrogenase pathway; NH(3) and pyruvate from L-alanine: step 1/1. Functionally, may play a role in cell wall synthesis as L-alanine is an important constituent of the peptidoglycan layer. The protein is Alanine dehydrogenase 1 (ald1) of Staphylococcus aureus (strain MRSA252).